We begin with the raw amino-acid sequence, 1127 residues long: DNA-directed RNA polymerase I subunit RPA2 homolog (1127 aa).

S1025 carries the phosphoserine modification.

This sequence belongs to the RNA polymerase beta chain family. As to quaternary structure, component of the RNA polymerase I (Pol I) complex consisting of at least 13 subunits.

The protein resides in the nucleus. Its subcellular location is the nucleolus. The enzyme catalyses RNA(n) + a ribonucleoside 5'-triphosphate = RNA(n+1) + diphosphate. With respect to regulation, antisense ribosomal siRNAs silence rRNA expression during the elongation phase by decreasing rpoa-2 occupancy downstream of the RNAi-targeted region in nrde-2-dependent manner. Its function is as follows. DNA-dependent RNA polymerase catalyzes the transcription of DNA into RNA using the four ribonucleoside triphosphates as substrates. Second largest core component of RNA polymerase I which synthesizes ribosomal RNA precursors. Proposed to contribute to the polymerase catalytic activity and forms the polymerase active center together with the largest subunit. Pol I is composed of mobile elements and RPA2 is part of the core element with the central large cleft and probably a clamp element that moves to open and close the cleft. Specifically binds to 18S, 5.8S and 26S rDNA, but not to 5S rDNA. This is DNA-directed RNA polymerase I subunit RPA2 homolog from Caenorhabditis elegans.